The sequence spans 316 residues: Protein FLUORESCENT IN BLUE LIGHT, chloroplastic (316 aa).

The transit peptide at 1-26 (MAALIRCCSSFSHTSGGQPPPRDKSR) directs the protein to the chloroplast. A helical transmembrane segment spans residues 125–145 (MFSMPILLLVALIGATVGGLL). A coiled-coil region spans residues 144–175 (LLARQRKGELQRLNEQLRQINAALRRQAKIES). TPR repeat units follow at residues 203 to 236 (LISK…AQSL), 243 to 276 (KKAA…SKRE), and 283 to 316 (TEAY…LETD).

As to quaternary structure, part of the FLU-containing chloroplast membrane complex composed of FLU, CRD1, PORB, PORC, CHLP and HEMA1. Interacts with HEMA1 (via C-terminus) only in the absence of light. No interaction with HEMA2.

It localises to the plastid. The protein localises to the chloroplast membrane. Its subcellular location is the chloroplast thylakoid membrane. Functionally, negative regulator of tetrapyrrole biosynthesis (including chlorophyll) in chloroplasts, probably via HEMA1 repression. Inhibits especially the magnesium ion Mg(2+) branch of tetrapyrrole biosynthesis, but independently of heme. The polypeptide is Protein FLUORESCENT IN BLUE LIGHT, chloroplastic (FLU) (Arabidopsis thaliana (Mouse-ear cress)).